Reading from the N-terminus, the 176-residue chain is Large ribosomal subunit protein uL6 (176 aa).

It belongs to the universal ribosomal protein uL6 family. In terms of assembly, part of the 50S ribosomal subunit.

Its function is as follows. This protein binds to the 23S rRNA, and is important in its secondary structure. It is located near the subunit interface in the base of the L7/L12 stalk, and near the tRNA binding site of the peptidyltransferase center. This chain is Large ribosomal subunit protein uL6, found in Burkholderia vietnamiensis (strain G4 / LMG 22486) (Burkholderia cepacia (strain R1808)).